The primary structure comprises 294 residues: Ribosomal RNA small subunit methyltransferase A (294 aa).

Asparagine 31, leucine 33, glycine 58, glutamate 79, aspartate 111, and asparagine 136 together coordinate S-adenosyl-L-methionine.

This sequence belongs to the class I-like SAM-binding methyltransferase superfamily. rRNA adenine N(6)-methyltransferase family. RsmA subfamily.

It is found in the cytoplasm. It carries out the reaction adenosine(1518)/adenosine(1519) in 16S rRNA + 4 S-adenosyl-L-methionine = N(6)-dimethyladenosine(1518)/N(6)-dimethyladenosine(1519) in 16S rRNA + 4 S-adenosyl-L-homocysteine + 4 H(+). Specifically dimethylates two adjacent adenosines (A1518 and A1519) in the loop of a conserved hairpin near the 3'-end of 16S rRNA in the 30S particle. May play a critical role in biogenesis of 30S subunits. The sequence is that of Ribosomal RNA small subunit methyltransferase A from Lactobacillus acidophilus (strain ATCC 700396 / NCK56 / N2 / NCFM).